The following is a 189-amino-acid chain: Calcyphosin (189 aa).

4 consecutive EF-hand domains span residues 21 to 56, 57 to 92, 93 to 128, and 136 to 172; these read LGIQ…LGLV, LDTA…PMSQ, AREA…RTHP, and TEEE…VSAS. Ca(2+)-binding residues include D34, D36, S38, S40, E45, D70, D72, S74, T76, E81, D106, S108, D110, and D117. S40 is subject to Phosphoserine; by PKA.

In terms of assembly, monomer. Does not form oligomers in the presence of calcium. Post-translationally, phosphorylated in response to thyrotropin and cAMP. As to expression, detected in thyroid, salivary gland, lung, brain and cerebellum (at protein level).

It is found in the cytoplasm. In terms of biological role, calcium-binding protein. May play a role in cellular signaling events (Potential). The polypeptide is Calcyphosin (CAPS) (Canis lupus familiaris (Dog)).